The following is a 206-amino-acid chain: Delta and osm-11 homolog protein 1 (206 aa).

In Caenorhabditis elegans, this protein is Delta and osm-11 homolog protein 1 (dos-1).